The primary structure comprises 309 residues: MNITILSGGTGTPKLIQGFKEIIPNEDISVIVNTGEDTYIGDIYLSPDIDTVLYTFSDLINDETWYGLKGDTFICHEQLKKFGFDEVLKIGDKDRALKMHKASSLKNGVPMSEIVDIERKSLSLKSKIYPMSNERVESKVLIEENNEKILLKFHDFWIFRKGNAKVLDIFYENSNYAKAADGVIKAIEESDFILIGPSNPITSIGPILSISEIKNALKEKLVFAVSPIVGENPVSGPAGTLMNAKGYPVSAVGVYEYYKDIVDVLVLDNSDINKKKDINCEVLYANTIMKTIDDKITLARNILDYYKSR.

The 7,8-didemethyl-8-hydroxy-5-deazariboflavin site is built by aspartate 50 and lysine 89.

It belongs to the CofD family. Homodimer. It depends on Mg(2+) as a cofactor.

The catalysed reaction is (2S)-lactyl-2-diphospho-5'-guanosine + 7,8-didemethyl-8-hydroxy-5-deazariboflavin = oxidized coenzyme F420-0 + GMP + H(+). Its pathway is cofactor biosynthesis; coenzyme F420 biosynthesis. Catalyzes the transfer of the 2-phospholactate moiety from (2S)-lactyl-2-diphospho-5'-guanosine to 7,8-didemethyl-8-hydroxy-5-deazariboflavin (FO) with the formation of oxidized coenzyme F420-0 and GMP. The sequence is that of 2-phospho-L-lactate transferase from Methanococcus maripaludis (strain C5 / ATCC BAA-1333).